A 187-amino-acid polypeptide reads, in one-letter code: Elongation factor P (187 aa).

Belongs to the elongation factor P family.

Its subcellular location is the cytoplasm. It participates in protein biosynthesis; polypeptide chain elongation. Its function is as follows. Involved in peptide bond synthesis. Stimulates efficient translation and peptide-bond synthesis on native or reconstituted 70S ribosomes in vitro. Probably functions indirectly by altering the affinity of the ribosome for aminoacyl-tRNA, thus increasing their reactivity as acceptors for peptidyl transferase. The protein is Elongation factor P of Roseiflexus castenholzii (strain DSM 13941 / HLO8).